A 249-amino-acid polypeptide reads, in one-letter code: Ribosomal RNA small subunit methyltransferase J (249 aa).

Residues 101 to 102 (RD), 117 to 118 (ER), 153 to 154 (SS), and Asp171 contribute to the S-adenosyl-L-methionine site.

Belongs to the methyltransferase superfamily. RsmJ family.

The protein localises to the cytoplasm. The enzyme catalyses guanosine(1516) in 16S rRNA + S-adenosyl-L-methionine = N(2)-methylguanosine(1516) in 16S rRNA + S-adenosyl-L-homocysteine + H(+). In terms of biological role, specifically methylates the guanosine in position 1516 of 16S rRNA. This Salmonella arizonae (strain ATCC BAA-731 / CDC346-86 / RSK2980) protein is Ribosomal RNA small subunit methyltransferase J.